The sequence spans 307 residues: Small ribosomal subunit protein uS3 (307 aa).

In terms of domain architecture, KH type-2 spans Met17 to Lys86. Positions Ile201–Lys226 are enriched in basic and acidic residues. The disordered stretch occupies residues Ile201–Glu265. Positions Pro240–Glu265 are enriched in acidic residues.

It belongs to the universal ribosomal protein uS3 family. Part of the 30S ribosomal subunit.

Functionally, binds the lower part of the 30S subunit head. The polypeptide is Small ribosomal subunit protein uS3 (Methanosarcina mazei (strain ATCC BAA-159 / DSM 3647 / Goe1 / Go1 / JCM 11833 / OCM 88) (Methanosarcina frisia)).